Consider the following 357-residue polypeptide: Protein AAR2 homolog (357 aa).

Belongs to the AAR2 family.

The protein is Protein AAR2 homolog of Caenorhabditis elegans.